The chain runs to 338 residues: E3 ubiquitin-protein ligase SPL1 (338 aa).

Residues 1–21 traverse the membrane as a helical segment; that stretch reads MIHLAGFTCCLGGVALYLLTR. Over 22 to 223 the chain is Chloroplast intermembrane; that stretch reads STGRDIKSIT…KLGDLSRRFK (202 aa). A helical transmembrane segment spans residues 224–246; the sequence is YASMGLTVLGVILISKPVIEYIL. The Cytoplasmic segment spans residues 247-338; sequence KRIEDTLERR…IQQVLKIYRH (92 aa). An RING-type zinc finger spans residues 291 to 326; sequence CVVCLDQKYNTAFVECGHMCCCTPCSLQLRTCPLCR.

The protein resides in the plastid. The protein localises to the chloroplast outer membrane. The catalysed reaction is S-ubiquitinyl-[E2 ubiquitin-conjugating enzyme]-L-cysteine + [acceptor protein]-L-lysine = [E2 ubiquitin-conjugating enzyme]-L-cysteine + N(6)-ubiquitinyl-[acceptor protein]-L-lysine.. Its pathway is protein modification; protein ubiquitination. Its function is as follows. Possesses E3 ubiquitin-protein ligase activity. The protein is E3 ubiquitin-protein ligase SPL1 of Arabidopsis thaliana (Mouse-ear cress).